Here is a 361-residue protein sequence, read N- to C-terminus: Probable dual-specificity RNA methyltransferase RlmN (361 aa).

Catalysis depends on Glu91, which acts as the Proton acceptor. The Radical SAM core domain maps to 97–329 (QHYGLSVCVT…KKKGGNCVVR (233 aa)). Cys104 and Cys340 are disulfide-bonded. [4Fe-4S] cluster contacts are provided by Cys111, Cys115, and Cys118. S-adenosyl-L-methionine-binding positions include 163–164 (GE), Ser195, 218–220 (SLH), and Asn296. Cys340 acts as the S-methylcysteine intermediate in catalysis.

The protein belongs to the radical SAM superfamily. RlmN family. [4Fe-4S] cluster serves as cofactor.

The protein localises to the cytoplasm. It catalyses the reaction adenosine(2503) in 23S rRNA + 2 reduced [2Fe-2S]-[ferredoxin] + 2 S-adenosyl-L-methionine = 2-methyladenosine(2503) in 23S rRNA + 5'-deoxyadenosine + L-methionine + 2 oxidized [2Fe-2S]-[ferredoxin] + S-adenosyl-L-homocysteine. It carries out the reaction adenosine(37) in tRNA + 2 reduced [2Fe-2S]-[ferredoxin] + 2 S-adenosyl-L-methionine = 2-methyladenosine(37) in tRNA + 5'-deoxyadenosine + L-methionine + 2 oxidized [2Fe-2S]-[ferredoxin] + S-adenosyl-L-homocysteine. Its function is as follows. Specifically methylates position 2 of adenine 2503 in 23S rRNA and position 2 of adenine 37 in tRNAs. This chain is Probable dual-specificity RNA methyltransferase RlmN, found in Streptococcus pneumoniae serotype 2 (strain D39 / NCTC 7466).